A 508-amino-acid polypeptide reads, in one-letter code: Tryptamine 4-monooxygenase (508 aa).

The N-terminal stretch at 1-19 (MIAVLFSFVIAGCIYYIVS) is a signal peptide. C439 contacts heme.

This sequence belongs to the cytochrome P450 family. It depends on heme as a cofactor.

It carries out the reaction tryptamine + AH2 + O2 = 4-hydroxytryptamine + A + H2O. It participates in secondary metabolite biosynthesis. Its function is as follows. Cytochrome P450 monooxygenase; part of the gene cluster that mediates the biosynthesis of psilocybin, a psychotropic tryptamine-derived natural product. The first step in the pathway is the decarboxylation of L-tryptophan to tryptamine by the decarboxylase psiD. 4-hydroxy-L-tryptophan is accepted as substrate by psiD as well. The cytochrome P450 monooxygenase psiH then converts tryptamine to 4-hydroxytryptamine. The kinase psiK catalyzes the 4-O-phosphorylation step by converting 4-hydroxytryptamine into norbaeocystin. The methyltransferase psiM then catalyzes iterative methyl transfer to the amino group of norbaeocystin to yield psilocybin via a monomethylated intermediate, baeocystin. The sequence is that of Tryptamine 4-monooxygenase from Psilocybe cubensis (Psychedelic mushroom).